The following is a 79-amino-acid chain: MKLSFLSLVLAIILVMALMYTPHAEAKAWADADADATAAADADADAVADALADAVAKIKIPWGKVKDFLVGGMKAVGKK.

The first 26 residues, 1–26 (MKLSFLSLVLAIILVMALMYTPHAEA), serve as a signal peptide directing secretion. The propeptide occupies 27 to 56 (KAWADADADATAAADADADAVADALADAVA). The residue at position 76 (Val-76) is a Valine amide.

It belongs to the formicidae venom precursor-01 superfamily. Post-translationally, the C-terminal amidation is important for antimicrobial activity, since a non-amidated synthetic peptide shows a reduced antimicrobial activity (2-20-fold depending on the strain tested). The amidation may play a positive role in the peptide conformation, since amidated peptide shows an increase of about 5% of helical content. As to expression, expressed by the venom gland.

It is found in the secreted. It localises to the target cell membrane. Antimicrobial peptide that shows antimicrobial activities against all microorganisms tested with minimal inhibitory concentrations (MICs) values ranging from 0.45 to 97.5 umol/L. This peptide kills the microorganisms by permeabilizating the membranes. It shows a very weak hemolytic activity (HC(50)=325 umol/L) and weak cytotoxicity against human lymphocytes (LC(50)=67.8 umol/L). Gram-negative bacteria tested are E.coli (MIC=24.4 umol/L), C.sakazakii (MIC=5.8 umol/L), P.aeruginosa (MIC=8.7-12.2 umol/L), S.enterica (MIC=5.4 umol/L), and H.pylori (MIC=0.99-3.9 umol/L). Gram-positive bacteria tested are E.hirae (MIC=12.2 umol/L), S.aureus (MIC=3.0-6.4 umol/L), methicillin-resistant S.aureus (MRSA) (MIC=8.7 umol/L), S.xylosus (MIC=0.45-1.3 umol/L), and B.subtilis (MIC=24.4 umol/L). Fungi tested are A.niger (MIC=0.75 umol/L), C.albicans (MIC=17.3 umol/L), G.candidum (MIC=97.5 umol/L), and S.cerevisiae (MIC=6.1 umol/L). Finally the parasite tested is L.infantum (MIC=1.5 umol/L). The polypeptide is M-myrmicitoxin(01)-Tb1a (Tetramorium bicarinatum (Tramp ant)).